The chain runs to 231 residues: Protein C activator (231 aa).

The Peptidase S1 domain occupies 1 to 222; sequence VIGGDECNIN…YTDWIQSIIS (222 aa). Intrachain disulfides connect C7/C138, C25/C41, C73/C229, C117/C183, C149/C162, and C173/C198. An N-linked (GlcNAc...) asparagine glycan is attached at N21. H40 acts as the Charge relay system in catalysis. N78 is a glycosylation site (N-linked (GlcNAc...) asparagine). The active-site Charge relay system is the D85. N129 carries an N-linked (GlcNAc...) asparagine glycan. S177 (charge relay system) is an active-site residue.

It belongs to the peptidase S1 family. Snake venom subfamily. As to quaternary structure, monomer. As to expression, expressed by the venom gland.

The protein resides in the secreted. Snake venom serine protease that selectively cleaves the heavy chain of protein C (PROC). This activation is thrombomodulin-independent. The protein is Protein C activator of Agkistrodon contortrix contortrix (Southern copperhead).